A 103-amino-acid chain; its full sequence is G0/G1 switch protein 2 (103 aa).

The segment at 80–103 (LQEKGKQQDTVLGGRALSNRQHAS) is disordered.

Directly interacts with BCL2; this interaction prevents the formation of the anti-apoptotic BAX-BCL2 complex. As to expression, widely expressed with highest levels in peripheral blood, skeletal muscle and heart, followed by kidney and liver.

The protein localises to the mitochondrion. Promotes apoptosis by binding to BCL2, hence preventing the formation of protective BCL2-BAX heterodimers. This Homo sapiens (Human) protein is G0/G1 switch protein 2 (G0S2).